A 41-amino-acid polypeptide reads, in one-letter code: Augerpeptide hhe6.1 (41 aa).

Intrachain disulfides connect Cys11–Cys32, Cys18–Cys35, and Cys31–Cys40.

As to expression, expressed by the venom duct.

It localises to the secreted. The sequence is that of Augerpeptide hhe6.1 from Hastula hectica (Sea snail).